A 790-amino-acid chain; its full sequence is B3 domain-containing transcription repressor VAL1 (790 aa).

Residues 234–260 are disordered; it reads KPSRPAISTPPVASKSAQARIGRPPVE. Positions 295 to 396 form a DNA-binding region, TF-B3; that stretch reads FEKTLSASDA…KLIMGSRKAA (102 aa). Disordered stretches follow at residues 400-429 and 446-468; these read DMQGCGLTNGTSTEDTSSSGVTENPPSING and NLNSETNGGRIGDDPTRVKEKKR. The span at 405–429 shows a compositional bias: polar residues; sequence GLTNGTSTEDTSSSGVTENPPSING. The CW-type zinc-finger motif lies at 538 to 588; it reads SGEQERWATCDDCSKWRRLPVDALLSFKWTCIDNVWDVSRCSCSAPEESLK. Residues Cys-547, Cys-550, Cys-568, and Cys-580 each contribute to the Zn(2+) site. Positions 685 to 732 form a coiled coil; that stretch reads LMMRRKKKQLERDVTAAEDKKKKDMELAESDKSKEEKEVNTARIDLNS. Residues 689–737 form a disordered region; that stretch reads RKKKQLERDVTAAEDKKKKDMELAESDKSKEEKEVNTARIDLNSDPYNK. Over residues 694 to 724 the composition is skewed to basic and acidic residues; it reads LERDVTAAEDKKKKDMELAESDKSKEEKEVN.

Interacts with SNL1. As to expression, expressed in flowers and at lower levels in roots, stems and leaves.

It localises to the nucleus. Functionally, transcriptional repressor of gene expression involved in embryonic pathways, such as LEC1, ABI3, and FUS3. Repressor of the sugar-inducible genes involved in the seed maturation program in seedlings. Plays an essential role in regulating the transition from seed maturation to seedling growth. Functionally redundant with VAL2/HSL1. The polypeptide is B3 domain-containing transcription repressor VAL1 (VAL1) (Arabidopsis thaliana (Mouse-ear cress)).